We begin with the raw amino-acid sequence, 152 residues long: 3-hydroxyacyl-[acyl-carrier-protein] dehydratase FabZ (152 aa).

Histidine 57 is a catalytic residue.

It belongs to the thioester dehydratase family. FabZ subfamily.

It is found in the cytoplasm. It carries out the reaction a (3R)-hydroxyacyl-[ACP] = a (2E)-enoyl-[ACP] + H2O. In terms of biological role, involved in unsaturated fatty acids biosynthesis. Catalyzes the dehydration of short chain beta-hydroxyacyl-ACPs and long chain saturated and unsaturated beta-hydroxyacyl-ACPs. This is 3-hydroxyacyl-[acyl-carrier-protein] dehydratase FabZ from Bradyrhizobium sp. (strain BTAi1 / ATCC BAA-1182).